Here is a 439-residue protein sequence, read N- to C-terminus: tRNA modification GTPase MnmE (439 aa).

(6S)-5-formyl-5,6,7,8-tetrahydrofolate contacts are provided by Arg-24, Glu-81, and Lys-121. Residues 218-363 enclose the TrmE-type G domain; it reads GFKVVIAGAP…LRRLIGDIVE (146 aa). Asn-228 is a K(+) binding site. Residues 228–233, 247–253, and 272–275 each bind GTP; these read NAGKSS, TEIAGTT, and DTAG. Ser-232 serves as a coordination point for Mg(2+). 3 residues coordinate K(+): Thr-247, Ile-249, and Thr-252. Thr-253 contributes to the Mg(2+) binding site. Residue Lys-439 coordinates (6S)-5-formyl-5,6,7,8-tetrahydrofolate.

Belongs to the TRAFAC class TrmE-Era-EngA-EngB-Septin-like GTPase superfamily. TrmE GTPase family. Homodimer. Heterotetramer of two MnmE and two MnmG subunits. Requires K(+) as cofactor.

It is found in the cytoplasm. In terms of biological role, exhibits a very high intrinsic GTPase hydrolysis rate. Involved in the addition of a carboxymethylaminomethyl (cmnm) group at the wobble position (U34) of certain tRNAs, forming tRNA-cmnm(5)s(2)U34. The polypeptide is tRNA modification GTPase MnmE (Rhizobium johnstonii (strain DSM 114642 / LMG 32736 / 3841) (Rhizobium leguminosarum bv. viciae)).